The following is a 135-amino-acid chain: Hydroxylaminobenzene mutase HabA (135 aa).

Helical transmembrane passes span 5–25, 33–55, 67–87, and 113–133; these read LFAS…LVPV, VAGH…LWPY, FWLL…AALW, and FLLF…LIGI.

It is found in the cell membrane. The enzyme catalyses N-phenylhydroxylamine = 2-aminophenol. In terms of biological role, catalyzes the rearrangement of hydroxylaminobenzene to 2-aminophenol. Involved in the degradation of nitrobenzene. The protein is Hydroxylaminobenzene mutase HabA (habA) of Ectopseudomonas oleovorans (Pseudomonas oleovorans).